The sequence spans 265 residues: Ribosomal RNA small subunit methyltransferase A (265 aa).

His-13, Leu-15, Gly-40, Glu-61, Asp-85, and Asn-103 together coordinate S-adenosyl-L-methionine.

The protein belongs to the class I-like SAM-binding methyltransferase superfamily. rRNA adenine N(6)-methyltransferase family. RsmA subfamily.

The protein resides in the cytoplasm. It catalyses the reaction adenosine(1518)/adenosine(1519) in 16S rRNA + 4 S-adenosyl-L-methionine = N(6)-dimethyladenosine(1518)/N(6)-dimethyladenosine(1519) in 16S rRNA + 4 S-adenosyl-L-homocysteine + 4 H(+). Its function is as follows. Specifically dimethylates two adjacent adenosines (A1518 and A1519) in the loop of a conserved hairpin near the 3'-end of 16S rRNA in the 30S particle. May play a critical role in biogenesis of 30S subunits. The chain is Ribosomal RNA small subunit methyltransferase A from Bordetella pertussis (strain Tohama I / ATCC BAA-589 / NCTC 13251).